The following is a 401-amino-acid chain: Tyrosine--tRNA ligase (401 aa).

Residues 42–51 (PTAPDLHLGH) carry the 'HIGH' region motif. Residues 226 to 230 (KMSKS) carry the 'KMSKS' region motif. K229 serves as a coordination point for ATP. One can recognise an S4 RNA-binding domain in the interval 336 to 397 (IALAQLLKQI…GKRRIAKLSI (62 aa)).

The protein belongs to the class-I aminoacyl-tRNA synthetase family. TyrS type 2 subfamily. In terms of assembly, homodimer.

The protein resides in the cytoplasm. It catalyses the reaction tRNA(Tyr) + L-tyrosine + ATP = L-tyrosyl-tRNA(Tyr) + AMP + diphosphate + H(+). Catalyzes the attachment of tyrosine to tRNA(Tyr) in a two-step reaction: tyrosine is first activated by ATP to form Tyr-AMP and then transferred to the acceptor end of tRNA(Tyr). This chain is Tyrosine--tRNA ligase, found in Legionella pneumophila (strain Lens).